The chain runs to 489 residues: tRNA(Ile)-lysidine synthase (489 aa).

35–40 (SGGLDS) provides a ligand contact to ATP.

The protein belongs to the tRNA(Ile)-lysidine synthase family.

The protein resides in the cytoplasm. It catalyses the reaction cytidine(34) in tRNA(Ile2) + L-lysine + ATP = lysidine(34) in tRNA(Ile2) + AMP + diphosphate + H(+). Functionally, ligates lysine onto the cytidine present at position 34 of the AUA codon-specific tRNA(Ile) that contains the anticodon CAU, in an ATP-dependent manner. Cytidine is converted to lysidine, thus changing the amino acid specificity of the tRNA from methionine to isoleucine. This Burkholderia pseudomallei (strain K96243) protein is tRNA(Ile)-lysidine synthase.